The chain runs to 109 residues: MNAVFIVFLSAILSYPHESFAEELATKHKHVEHCLGSDGEGHPLNEFWYDDGMCQRFYCFRDDEGIIYEQITNCPIAIAEGDCKINPGTAGSYPDCCPTVICPDSPKAF.

The N-terminal stretch at 1–21 is a signal peptide; sequence MNAVFIVFLSAILSYPHESFA.

It belongs to the scoloptoxin-16 family. Post-translationally, contains 4 disulfide bonds. In terms of tissue distribution, expressed by the venom gland.

It localises to the secreted. The chain is U-scoloptoxin(16)-Cw1a from Cormocephalus westwoodi (Westwood's green centipede).